The chain runs to 159 residues: U1 small nuclear ribonucleoprotein C (159 aa).

The segment at 4 to 36 (FYCDYCDTYLTHDSPSVRKTHCSGRKHKENVKD) adopts a Matrin-type zinc-finger fold. Tyr8 is modified (phosphotyrosine). A Phosphoserine modification is found at Ser17. Lys52 is modified (N6-acetyllysine). Disordered regions lie at residues 62–96 (IPPT…PAPH) and 140–159 (RPPA…RPDR). The span at 63 to 92 (PPTPFSAPPPAGAMIPPPPSLPGPPRPGMM) shows a compositional bias: pro residues.

It belongs to the U1 small nuclear ribonucleoprotein C family. Component of the U1 snRNP. The U1 snRNP is composed of the U1 snRNA and the 7 core Sm proteins SNRPB, SNRPD1, SNRPD2, SNRPD3, SNRPE, SNRPF and SNRPG that assemble in a heptameric protein ring on the Sm site of the small nuclear RNA to form the core snRNP, and at least 3 U1 snRNP-specific proteins SNRNP70/U1-70K, SNRPA/U1-A and SNRPC/U1-C. SNRPC/U1-C interacts with U1 snRNA and the 5' splice-site region of the pre-mRNA. Interacts (via N-terminus) with TIA1 (via C-terminus); thereby promoting spliceosomal U1 snRNP recruitment to 5' splice sites.

Its subcellular location is the nucleus. In terms of biological role, component of the spliceosomal U1 snRNP, which is essential for recognition of the pre-mRNA 5' splice-site and the subsequent assembly of the spliceosome. SNRPC/U1-C is directly involved in initial 5' splice-site recognition for both constitutive and regulated alternative splicing. The interaction with the 5' splice-site seems to precede base-pairing between the pre-mRNA and the U1 snRNA. Stimulates commitment or early (E) complex formation by stabilizing the base pairing of the 5' end of the U1 snRNA and the 5' splice-site region. This chain is U1 small nuclear ribonucleoprotein C, found in Homo sapiens (Human).